Reading from the N-terminus, the 700-residue chain is Glycine--tRNA ligase beta subunit (700 aa).

The protein belongs to the class-II aminoacyl-tRNA synthetase family. In terms of assembly, tetramer of two alpha and two beta subunits.

The protein resides in the cytoplasm. It catalyses the reaction tRNA(Gly) + glycine + ATP = glycyl-tRNA(Gly) + AMP + diphosphate. This is Glycine--tRNA ligase beta subunit from Janthinobacterium sp. (strain Marseille) (Minibacterium massiliensis).